The following is a 248-amino-acid chain: MEQFKGLQKSLYIWTDSAELDKRVETLKAATGGEVAVENVHRLSFSSYANSSFDLIVIECAQLTDNYVKLLHMLKPSGILHLFAYIGPAGSLLQEIKLSGFINCREDAVANTLTAEKPGYETGSSARLSFAKKTSSVNVWKISGDDEELIDEEELLDEEDKQKPDPAGLRVCSTTGKRKACKNCSCGLAEELESEKTTKTVTENAKSSCGNCYLGDAFRCSTCPYLGMPAFKPGEKVQLADNLLKSDI.

Positions 4-130 (FKGLQKSLYI…ETGSSARLSF (127 aa)) are N-terminal SAM-like domain. Residues 131–161 (AKKTSSVNVWKISGDDEELIDEEELLDEEDK) form a linker region. [2Fe-2S] cluster-binding residues include C172, C181, C184, and C186. The tract at residues 172–186 (CSTTGKRKACKNCSC) is fe-S binding site A. [4Fe-4S] cluster-binding residues include C209, C212, C220, and C223. Short sequence motifs (cx2C motif) lie at residues 209 to 212 (CGNC) and 220 to 223 (CSTC). Residues 209–223 (CGNCYLGDAFRCSTC) are fe-S binding site B.

This sequence belongs to the anamorsin family. Monomer. The cofactor is [2Fe-2S] cluster. [4Fe-4S] cluster serves as cofactor.

It is found in the cytoplasm. It localises to the mitochondrion intermembrane space. Its function is as follows. Component of the cytosolic iron-sulfur (Fe-S) protein assembly (CIA) machinery. Required for the maturation of extramitochondrial Fe-S proteins. Part of an electron transfer chain functioning in an early step of cytosolic Fe-S biogenesis, facilitating the de novo assembly of a [4Fe-4S] cluster on the cytosolic Fe-S scaffold complex. Electrons are transferred from NADPH via a FAD- and FMN-containing diflavin oxidoreductase. Together with the diflavin oxidoreductase, also required for the assembly of the diferric tyrosyl radical cofactor of ribonucleotide reductase (RNR), probably by providing electrons for reduction during radical cofactor maturation in the catalytic small subunit. In Drosophila virilis (Fruit fly), this protein is Anamorsin homolog.